The following is a 149-amino-acid chain: UPF0208 membrane protein PBPRA2797 (149 aa).

2 helical membrane-spanning segments follow: residues 41 to 60 (FATRVMPAVAVMSVLSQMAF) and 65 to 87 (ALPQAMTVALFALTMPLQGLWWL).

Belongs to the UPF0208 family.

Its subcellular location is the cell inner membrane. In Photobacterium profundum (strain SS9), this protein is UPF0208 membrane protein PBPRA2797.